Consider the following 183-residue polypeptide: Dual-action ribosomal maturation protein DarP (183 aa).

A disordered region spans residues 1–20 (MKQKYEDWLNDVPDNQEDDE).

Belongs to the DarP family.

It localises to the cytoplasm. Functionally, member of a network of 50S ribosomal subunit biogenesis factors which assembles along the 30S-50S interface, preventing incorrect 23S rRNA structures from forming. Promotes peptidyl transferase center (PTC) maturation. This is Dual-action ribosomal maturation protein DarP from Pectobacterium carotovorum subsp. carotovorum (strain PC1).